The chain runs to 92 residues: YcgL domain-containing protein PBPRA1080 (92 aa).

In terms of domain architecture, YcgL spans 1-84; it reads MLCSIYKSSK…PVTNLLHQYK (84 aa).

This chain is YcgL domain-containing protein PBPRA1080, found in Photobacterium profundum (strain SS9).